The primary structure comprises 156 residues: Ribosomal RNA large subunit methyltransferase H (156 aa).

S-adenosyl-L-methionine-binding positions include Leu74, Gly105, and 124–129 (LSKLTL).

It belongs to the RNA methyltransferase RlmH family. Homodimer.

The protein localises to the cytoplasm. It carries out the reaction pseudouridine(1915) in 23S rRNA + S-adenosyl-L-methionine = N(3)-methylpseudouridine(1915) in 23S rRNA + S-adenosyl-L-homocysteine + H(+). Specifically methylates the pseudouridine at position 1915 (m3Psi1915) in 23S rRNA. This is Ribosomal RNA large subunit methyltransferase H from Legionella pneumophila (strain Paris).